We begin with the raw amino-acid sequence, 130 residues long: MSMHDPISDMLTRIRNAQRANKAAVAMPSSKLKCAIAKVLKEEGYIEDFAVSSDVKSILEIQLKYYAGRPVIEQIKRVSRPGLRIYKASSEIPSVMNGLGIAIVSTSKGVMTDRKARSQGVGGELLCIVA.

This sequence belongs to the universal ribosomal protein uS8 family. In terms of assembly, part of the 30S ribosomal subunit. Contacts proteins S5 and S12.

One of the primary rRNA binding proteins, it binds directly to 16S rRNA central domain where it helps coordinate assembly of the platform of the 30S subunit. The protein is Small ribosomal subunit protein uS8 of Neisseria meningitidis serogroup C (strain 053442).